The chain runs to 480 residues: Uronate isomerase (480 aa).

Belongs to the metallo-dependent hydrolases superfamily. Uronate isomerase family.

The catalysed reaction is D-glucuronate = D-fructuronate. The enzyme catalyses aldehydo-D-galacturonate = keto-D-tagaturonate. It participates in carbohydrate metabolism; pentose and glucuronate interconversion. The sequence is that of Uronate isomerase from Phenylobacterium zucineum (strain HLK1).